Consider the following 1018-residue polypeptide: Antigenic heat-stable 120 kDa protein (1018 aa).

The span at 1-11 (MSKDGNLNTSE) shows a compositional bias: polar residues. 3 disordered regions span residues 1 to 82 (MSKD…DPIT), 355 to 402 (GQSK…MPQS), and 995 to 1018 (RDSI…PPQR). Residues 19 to 34 (EYTEEQKQTLEQEQKE) are compositionally biased toward basic and acidic residues. Low complexity predominate over residues 53-68 (TSASSAQSTPSTSALS). Composition is skewed to polar residues over residues 69–80 (GNISPDSQTSDP), 355–380 (GQSK…QYKQ), 387–402 (PTNQ…MPQS), and 996–1007 (DSIQSENLNKST). Residues 1009–1018 (IKRESSPPQR) show a composition bias toward basic and acidic residues.

The protein resides in the cytoplasm. This is Antigenic heat-stable 120 kDa protein (sca4) from Rickettsia japonica (strain ATCC VR-1363 / YH).